A 489-amino-acid chain; its full sequence is Virion host shutoff protein (489 aa).

Disordered stretches follow at residues 110–135 (EEASDVDASPPPSPITDSRPSSAFSN), 142–161 (SLASGTRGTAGSGAALPSAA), 285–316 (RSQTRRAIRREHTSSRSTETRPPLPPAAGGTE), and 333–363 (YEDDEDLPLDPRDVTGGHPGPRSSSSEILTP). The segment covering 124-134 (ITDSRPSSAFS) has biased composition (polar residues).

The protein belongs to the herpesviridae VHS protein family. In terms of assembly, interacts with human EIF4H, EIF4A1 and EIF4A2; interaction with eIF4AI and EIF4A2 presumably allows Vhs protein to associate with the eIF4F cap-binding complex.

It localises to the virion. Its function is as follows. Minor structural protein that acts as an endoribonuclease during lytic infection. Degrades host mRNAs in the cytoplasm by cutting them at preferred sites, including some in regions of translation initiation. Together with inhibition of host splicing by ICP27, contributes to an overall decrease in host protein synthesis. Also, after the onset of viral transcription, accelerates the turnover of viral mRNA, thereby facilitating the sequential expression of different classes of viral genes. Binds translation initiation factors eIF4H, eIF4AI, and eIF4AII, thereby may interact directly with the translation initiation complex and thus digest specifically mRNAs. Also impedes antigen presentation by major histocompatibility complex class I and class II molecules, inhibits secretion of cytokines that would otherwise recruit lymphocytes and neutrophils cells to the site of infection and blocks the activation of dendritic cells. Impedes the alpha/beta interferon-mediated response to infection by evading the cGAS/ STING-mediated DNA-sensing pathway and degrading CGAS via its RNase activity. This is Virion host shutoff protein (UL41) from Human herpesvirus 1 (strain KOS) (HHV-1).